We begin with the raw amino-acid sequence, 59 residues long: Putative potassium channel toxin Ts23 (59 aa).

The N-terminal stretch at 1-22 (MKAFYGILIIFILISMLDLSQQ) is a signal peptide. Cystine bridges form between cysteine 29–cysteine 50, cysteine 35–cysteine 55, and cysteine 39–cysteine 57.

This sequence belongs to the short scorpion toxin superfamily. Potassium channel inhibitor family. Alpha-KTx 04 subfamily. As to expression, expressed by the venom gland.

It is found in the secreted. Its function is as follows. Potently blocks Kv1.1/KCNA1 (85%), Kv1.2/KCNA2 (91%), Kv1.3/KCNA3 (89%), Kv1.6/KCNA6 (94%), and Shaker (97%). This Tityus serrulatus (Brazilian scorpion) protein is Putative potassium channel toxin Ts23.